The sequence spans 93 residues: Small ribosomal subunit protein uS19 (93 aa).

This sequence belongs to the universal ribosomal protein uS19 family.

Protein S19 forms a complex with S13 that binds strongly to the 16S ribosomal RNA. In Ehrlichia canis (strain Jake), this protein is Small ribosomal subunit protein uS19.